Reading from the N-terminus, the 345-residue chain is Very-long-chain 3-oxoacyl-CoA reductase (345 aa).

The helical transmembrane segment at 26-46 threads the bilayer; it reads GAAVLLTTGTLFIASRVLTFV. Residues valine 71, aspartate 125, aspartate 133, asparagine 152, tyrosine 219, lysine 223, isoleucine 252, and serine 254 each contribute to the NADP(+) site. The Proton donor role is filled by tyrosine 219. Catalysis depends on lysine 223, which acts as the Lowers pKa of active site Tyr.

Belongs to the short-chain dehydrogenases/reductases (SDR) family.

It is found in the endoplasmic reticulum membrane. It catalyses the reaction a very-long-chain (3R)-3-hydroxyacyl-CoA + NADP(+) = a very-long-chain 3-oxoacyl-CoA + NADPH + H(+). Its pathway is lipid metabolism; fatty acid biosynthesis. In terms of biological role, component of the microsomal membrane bound fatty acid elongation system, which produces the 26-carbon very long-chain fatty acids (VLCFA) from palmitate. Catalyzes the reduction of the 3-ketoacyl-CoA intermediate that is formed in each cycle of fatty acid elongation. VLCFAs serve as precursors for ceramide and sphingolipids. The sequence is that of Very-long-chain 3-oxoacyl-CoA reductase from Aspergillus fumigatus (strain CBS 144.89 / FGSC A1163 / CEA10) (Neosartorya fumigata).